A 122-amino-acid chain; its full sequence is Large ribosomal subunit protein uL14 (122 aa).

It belongs to the universal ribosomal protein uL14 family. In terms of assembly, part of the 50S ribosomal subunit. Forms a cluster with proteins L3 and L19. In the 70S ribosome, L14 and L19 interact and together make contacts with the 16S rRNA in bridges B5 and B8.

In terms of biological role, binds to 23S rRNA. Forms part of two intersubunit bridges in the 70S ribosome. In Desulforapulum autotrophicum (strain ATCC 43914 / DSM 3382 / VKM B-1955 / HRM2) (Desulfobacterium autotrophicum), this protein is Large ribosomal subunit protein uL14.